A 357-amino-acid chain; its full sequence is MFAKLEDIERSFMDLEQELADPEVYNNQERYRKVTMAHAELGDVVAAFREYKQLSADLEDNKEMAKDSDPEIREMAEMEIAEIKDRLPKLEEELKLLLLPKDPMDGKNIILEIRAGTGGEEAALFAADLFRMYSRFAESNGWKVEVMNSNPTGTGGFKEIIAAISGSRIYSMMKYESGTHRVQRVPATETQGRIHTSAATVAIMPEAEEVDVQVRNEDLRIDVFRASGPGGQSVNTTDSAIRITHLPTGLVVICQDEKSQHKNKAKAMKVLCSRLLQAEQDKQHAEMAEQRRAQVGSGDRSERIRTYNFPQGRVTDHRINLTLYKLDAVIEGDMQELVESLISHYQSEALKQQAQDG.

Glutamine 232 is modified (N5-methylglutamine).

This sequence belongs to the prokaryotic/mitochondrial release factor family. Methylated by PrmC. Methylation increases the termination efficiency of RF1.

Its subcellular location is the cytoplasm. Its function is as follows. Peptide chain release factor 1 directs the termination of translation in response to the peptide chain termination codons UAG and UAA. In Maridesulfovibrio salexigens (strain ATCC 14822 / DSM 2638 / NCIMB 8403 / VKM B-1763) (Desulfovibrio salexigens), this protein is Peptide chain release factor 1.